The primary structure comprises 589 residues: Early growth response protein 4 (589 aa).

Disordered regions lie at residues 29 to 101, 383 to 411, and 436 to 466; these read GSAL…HSRR, AEGLPGLLTPPSGEGGSSGDGGEFLASTQ, and PGSSGVAAPPVPPPPPTPFPQAKARRKGRRG. Positions 76-86 are enriched in pro residues; sequence PLPPASPPPAR. The segment covering 92–101 has biased composition (basic residues); that stretch reads ARPRAPHSRR. Gly residues predominate over residues 395-404; it reads GEGGSSGDGG. The span at 444–454 shows a compositional bias: pro residues; the sequence is PPVPPPPPTPF. 3 C2H2-type zinc fingers span residues 483–507, 513–535, and 541–563; these read FACPVESCVRSFARSDELNRHLRIH, FQCRICLRNFSRSDHLTTHVRTH, and FACDVCGRRFARSDEKKRHSKVH.

Belongs to the EGR C2H2-type zinc-finger protein family.

It localises to the nucleus. Transcriptional regulator. Recognizes and binds to the DNA sequence 5'-GCGGGGGCG-3' (GSG). Activates the transcription of target genes whose products are required for mitogenesis and differentiation. This chain is Early growth response protein 4 (EGR4), found in Homo sapiens (Human).